The sequence spans 394 residues: Protein TsgA homolog (394 aa).

Helical transmembrane passes span 11-31, 51-71, 76-96, 101-121, 134-154, 162-182, 206-226, 246-266, 274-294, 302-322, 334-354, and 363-383; these read WISY…GIVM, FLNA…EIIP, LVFG…GHNL, ISMF…TFLV, LLFT…AAAM, WYWV…LTLC, VGVL…LGFI, QLVS…SFIL, IVTV…STDN, ILAL…LGSL, FILT…GPIV, and LETA…LGFF.

This sequence belongs to the major facilitator superfamily. TsgA family.

The protein resides in the cell inner membrane. The chain is Protein TsgA homolog from Yersinia pestis bv. Antiqua (strain Antiqua).